A 1513-amino-acid chain; its full sequence is Lid2 complex component lid2 (1513 aa).

The 42-residue stretch at 56-97 (GLSVQLNASNMTDPFKFLLDNWHTIFKNGAIKLLPPEGWQIP) folds into the JmjN domain. One can recognise an ARID domain in the interval 121 to 212 (YEKNYDYFKK…YIKPFERDSS (92 aa)). Positions 211–253 (SSPSFKSKRSESSTRKIRNTRSSAQQESPIPETSAQSPVQTIQ) are disordered. The segment covering 230 to 253 (TRSSAQQESPIPETSAQSPVQTIQ) has biased composition (polar residues). Residues 268–318 (GEQCEYCGLDKNPETILLCDGCEAAYHTSCLDPPLTSIPKEDWYCDACKFN) form a PHD-type 1 zinc finger. The JmjC domain maps to 408–574 (KYSSEPWNLH…DGLLNSSISV (167 aa)). Ser-722 is modified (phosphoserine). A disordered region spans residues 1063 to 1086 (LSLNDRPGPPMEPASRETSPDSEG). Over residues 1076–1086 (ASRETSPDSEG) the composition is skewed to basic and acidic residues. Residues 1093–1145 (KKGCIFCFCRLPESGVMIECEICHEWYHAKCLKMSKKKLRQDEKFTCPICDYR) form a PHD-type 2 zinc finger. The RING-type 1; degenerate zinc-finger motif lies at 1096–1143 (CIFCFCRLPESGVMIECEICHEWYHAKCLKMSKKKLRQDEKFTCPICD). Disordered regions lie at residues 1244-1268 (APNP…RQRQ) and 1280-1327 (ASAI…NNKN). Positions 1257 to 1268 (TRKPRPTKRQRQ) are enriched in basic residues. Positions 1301–1313 (VEAETKSKSEKSP) are enriched in basic and acidic residues. Residues 1316 to 1326 (NGTNISDANNK) are compositionally biased toward polar residues. The PHD-type 3 zinc-finger motif lies at 1352–1403 (NSSCLCGEEFSPRDSFIDCTICERRFHYDCVGLNNEIADSVSKFTCPICMEQ). The segment at 1354 to 1401 (SCLCGEEFSPRDSFIDCTICERRFHYDCVGLNNEIADSVSKFTCPICM) adopts an RING-type 2; degenerate zinc-finger fold.

Component of the Lid2 complex composed of ash2, jmj3, lid2, sdc1 and snt2.

It localises to the nucleus. This Schizosaccharomyces pombe (strain 972 / ATCC 24843) (Fission yeast) protein is Lid2 complex component lid2 (lid2).